A 172-amino-acid polypeptide reads, in one-letter code: Bone marrow stromal antigen 2 (172 aa).

The Cytoplasmic portion of the chain corresponds to 1 to 26 (MAPSFYHYLPVAMDERWEPKGWSIRR). Lys20 is covalently cross-linked (Glycyl lysine isopeptide (Lys-Gly) (interchain with G-Cter in ubiquitin)). The chain crosses the membrane as a helical; Signal-anchor for type II membrane protein span at residues 27–47 (WWLVAAILVVLIGVVLVCLIV). Residues 48-152 (YFANAAHSEA…EISTTVQVNS (105 aa)) lie on the Extracellular side of the membrane. N-linked (GlcNAc...) asparagine glycans are attached at residues Asn70 and Asn97. Positions 103–149 (LRDSLKKKVSQTQEQQARIKELENKIERLNQELENLRTQKEISTTVQ) form a coiled coil. A lipid anchor (GPI-anchor amidated serine) is attached at Ser152. Positions 153–172 (GGSVVVSSLLVLVAVLFLHF) are cleaved as a propeptide — removed in mature form.

As to quaternary structure, parallel homodimer; disulfide-linked. May form homotetramers under reducing conditions. Isoform 1 and isoform 2 form homodimers and also heterodimers with each other. Dimerization is essential for its antiviral activity. Interacts (via cytoplasmic domain) with ARHGAP44. Interacts with MMP14 (via C-terminal cytoplasmic tail). Interacts with LILRA4/ILT7. Interacts with RNF115. Post-translationally, N-glycosylated. In terms of processing, the GPI anchor is essential for its antiviral activity. As to expression, ubiquitously expressed, with highest levels in brain and liver. Present in liver (at protein level).

The protein resides in the golgi apparatus. It is found in the trans-Golgi network. Its subcellular location is the cell membrane. It localises to the late endosome. The protein localises to the membrane raft. The protein resides in the cytoplasm. It is found in the apical cell membrane. Its function is as follows. IFN-induced antiviral host restriction factor which efficiently blocks the release of diverse mammalian enveloped viruses by directly tethering nascent virions to the membranes of infected cells. Acts as a direct physical tether, holding virions to the cell membrane and linking virions to each other. The tethered virions can be internalized by endocytosis and subsequently degraded or they can remain on the cell surface. In either case, their spread as cell-free virions is restricted. Its target viruses belong to diverse families, including retroviridae: human immunodeficiency virus type 1 (HIV-1), mouse mammary tumor virus (MMTV) and murine leukemia virus (MLV), filoviridae: ebola virus (EBOV), arenaviridae: lassa virus (LASV), and rhabdoviridae: vesicular stomatitis virus (VSV). Can inhibit cell surface proteolytic activity of MMP14 causing decreased activation of MMP15 which results in inhibition of cell growth and migration. Can stimulate signaling by LILRA4/ILT7 and consequently provide negative feedback to the production of IFN by plasmacytoid dendritic cells in response to viral infection. Plays a role in the organization of the subapical actin cytoskeleton in polarized epithelial cells. The polypeptide is Bone marrow stromal antigen 2 (Bst2) (Rattus norvegicus (Rat)).